A 594-amino-acid chain; its full sequence is Type IV inositol polyphosphate 5-phosphatase 7 (594 aa).

Residues 246–300 (FRCGHRPSDYSRRPSDYSRPSDYYSRPSNYSRPSDVSRWGSSDDDNGPGDSPSTF) form a disordered region. Residues 251 to 261 (RPSDYSRRPSD) show a composition bias toward basic and acidic residues. Over residues 262–279 (YSRPSDYYSRPSNYSRPS) the composition is skewed to low complexity. Catalytic regions lie at residues 435–450 (DRVI…IALS) and 515–530 (KRRT…WHGE).

It belongs to the inositol polyphosphate 5-phosphatase family. Broadly expressed in emerging organs. Mostly localized in procambium of growing organs. Restricted to vascular differentiating cells of young organs.

It is found in the nucleus. It localises to the cell membrane. It carries out the reaction a 1,2-diacyl-sn-glycero-3-phospho-(1D-myo-inositol-4,5-bisphosphate) + H2O = a 1,2-diacyl-sn-glycero-3-phospho-(1D-myo-inositol 4-phosphate) + phosphate. The catalysed reaction is a 1,2-diacyl-sn-glycero-3-phospho-(1D-myo-inositol-3,4,5-trisphosphate) + H2O = a 1,2-diacyl-sn-glycero-3-phospho-(1D-myo-inositol-3,4-bisphosphate) + phosphate. Its function is as follows. Has phosphatase activity toward PtdIns(4,5)P2 and at a lower extent toward PtdIns(3,4,5)P3 but not toward Ins(1,4,5)P3. Acts redundantly with CVP2 for maintaining vascular continuity. Regulates phosphoinositide-dependent VAN3 localization. Functions in salt stress response by regulating reactive oxygen species (ROS) production and stress-responsive genes expression. This is Type IV inositol polyphosphate 5-phosphatase 7 from Arabidopsis thaliana (Mouse-ear cress).